The chain runs to 146 residues: Cytochrome c' (146 aa).

Positions 1-21 are cleaved as a signal peptide; that stretch reads MKLRIATIAGLVVLGSGFAVA. Heme c contacts are provided by R29, T86, A87, C134, C137, and H138.

In terms of assembly, monomer. In terms of processing, binds 1 heme c group covalently per subunit.

Its function is as follows. Cytochrome c' is the most widely occurring bacterial c-type cytochrome. Cytochromes c' are high-spin proteins and the heme has no sixth ligand. Their exact function is not known. This chain is Cytochrome c' (cycA), found in Rhodopseudomonas palustris (strain ATCC BAA-98 / CGA009).